The sequence spans 298 residues: UDP-N-acetylenolpyruvoylglucosamine reductase (298 aa).

The FAD-binding PCMH-type domain occupies 27–191; that stretch reads TGGEADVFVM…LDATFSLALE (165 aa). The active site involves arginine 170. Residue serine 220 is the Proton donor of the active site. The active site involves glutamate 290.

This sequence belongs to the MurB family. It depends on FAD as a cofactor.

Its subcellular location is the cytoplasm. The catalysed reaction is UDP-N-acetyl-alpha-D-muramate + NADP(+) = UDP-N-acetyl-3-O-(1-carboxyvinyl)-alpha-D-glucosamine + NADPH + H(+). Its pathway is cell wall biogenesis; peptidoglycan biosynthesis. Its function is as follows. Cell wall formation. The polypeptide is UDP-N-acetylenolpyruvoylglucosamine reductase (Listeria monocytogenes serotype 4a (strain HCC23)).